A 378-amino-acid chain; its full sequence is Chaperone protein DnaJ (378 aa).

Positions 5–70 (DYYEVLGVAK…QKRAAYDQYG (66 aa)) constitute a J domain. Residues 138–216 (GYDTQIRVPS…CHGSGKVKET (79 aa)) form a CR-type zinc finger. Residues Cys151, Cys154, Cys168, Cys171, Cys190, Cys193, Cys204, and Cys207 each contribute to the Zn(2+) site. CXXCXGXG motif repeat units follow at residues 151 to 158 (CEVCHGSG), 168 to 175 (CPTCHGQG), 190 to 197 (CPKCHGTG), and 204 to 211 (CVHCHGSG).

Belongs to the DnaJ family. In terms of assembly, homodimer. It depends on Zn(2+) as a cofactor.

The protein localises to the cytoplasm. Participates actively in the response to hyperosmotic and heat shock by preventing the aggregation of stress-denatured proteins and by disaggregating proteins, also in an autonomous, DnaK-independent fashion. Unfolded proteins bind initially to DnaJ; upon interaction with the DnaJ-bound protein, DnaK hydrolyzes its bound ATP, resulting in the formation of a stable complex. GrpE releases ADP from DnaK; ATP binding to DnaK triggers the release of the substrate protein, thus completing the reaction cycle. Several rounds of ATP-dependent interactions between DnaJ, DnaK and GrpE are required for fully efficient folding. Also involved, together with DnaK and GrpE, in the DNA replication of plasmids through activation of initiation proteins. This is Chaperone protein DnaJ from Burkholderia ambifaria (strain MC40-6).